Consider the following 451-residue polypeptide: KNR4/SMI1 homolog 1 (451 aa).

The span at 410–422 (ENQIAGGSDNAKN) shows a compositional bias: polar residues. Residues 410 to 451 (ENQIAGGSDNAKNQVKLGETSDTKQDDTSKIASTVSTSDEDE) are disordered. Over residues 428-438 (ETSDTKQDDTS) the composition is skewed to basic and acidic residues. The span at 439–451 (KIASTVSTSDEDE) shows a compositional bias: polar residues.

The protein belongs to the KNR4/SMI1 family.

This Debaryomyces hansenii (strain ATCC 36239 / CBS 767 / BCRC 21394 / JCM 1990 / NBRC 0083 / IGC 2968) (Yeast) protein is KNR4/SMI1 homolog 1.